The primary structure comprises 309 residues: Malate dehydrogenase (309 aa).

Residues 9–14 and aspartate 33 contribute to the NAD(+) site; that span reads GAGFVG. Positions 82 and 88 each coordinate substrate. NAD(+) is bound by residues asparagine 95 and 118–120; that span reads VNN. Substrate contacts are provided by asparagine 120 and arginine 151. Histidine 175 serves as the catalytic Proton acceptor.

Belongs to the LDH/MDH superfamily. MDH type 3 family.

It carries out the reaction (S)-malate + NAD(+) = oxaloacetate + NADH + H(+). In terms of biological role, catalyzes the reversible oxidation of malate to oxaloacetate. The protein is Malate dehydrogenase of Roseiflexus castenholzii (strain DSM 13941 / HLO8).